Consider the following 388-residue polypeptide: Flavin-dependent monooxygenase (388 aa).

R54 lines the NADPH pocket. D61, R117, and D311 together coordinate FAD.

This sequence belongs to the aromatic-ring hydroxylase family. TetX subfamily. In terms of assembly, monomer. FAD serves as cofactor.

It is found in the cytoplasm. It carries out the reaction a tetracycline + NADPH + O2 + H(+) = an 11a-hydroxytetracycline + NADP(+) + H2O. The enzyme catalyses tetracycline + NADPH + O2 + H(+) = 11a-hydroxytetracycline + NADP(+) + H2O. The catalysed reaction is oxytetracycline + NADPH + O2 + H(+) = 11a-hydroxy-oxytetracycline + NADP(+) + H2O. In terms of biological role, an FAD-requiring monooxygenase active on some tetracycline antibiotic derivatives, which leads to their inactivation. Hydroxylates carbon 11a of tetracycline and some analogs. Confers resistance to tetracycline via an oxidoreductase activity; NADPH is more active than NAD. Expression in E.coli leads to breakdown of tetracycline. Confers resistance to doxycycline, chlortetracycline, oxytetracycline and minocycline. In Bacteroides fragilis, this protein is Flavin-dependent monooxygenase.